Here is a 58-residue protein sequence, read N- to C-terminus: Small ribosomal subunit protein bS21 (58 aa).

The interval 31 to 58 (DLKRIRHHETPVEKYKRKAQQRRRSRRR) is disordered. Positions 45–58 (YKRKAQQRRRSRRR) are enriched in basic residues.

Belongs to the bacterial ribosomal protein bS21 family.

The polypeptide is Small ribosomal subunit protein bS21 (Prochlorococcus marinus (strain MIT 9303)).